The chain runs to 470 residues: FAD-dependent monooxygenase nvfK (470 aa).

Residues 1 to 23 (MEKAKFKVVIVGGSITGLTLAHC) form the signal peptide. Residues E35, G49, and R108 each coordinate FAD. The N-linked (GlcNAc...) asparagine glycan is linked to N121. The active site involves Y216. D308 and A321 together coordinate FAD. Residues 450–470 (ILMSIVLVAPAWVYIFSSLVW) form a helical membrane-spanning segment.

This sequence belongs to the paxM FAD-dependent monooxygenase family. It depends on FAD as a cofactor.

The protein localises to the membrane. The catalysed reaction is (3R)-3-farnesyl-6-hydroxy-2,3,5-trimethyl-4-oxocyclohexa-1,5-diene-1-carboxylate + 2-oxoglutarate + O2 = (3R)-[(10S)-11-epoxyfarnesyl]-2,3,5-trimethyl-6-oxido-4-oxocyclohexa-1,5-diene-1-carboxylate + succinate + CO2. Its pathway is secondary metabolite biosynthesis; terpenoid biosynthesis. Its function is as follows. FAD-dependent monooxygenase; part of the gene cluster that mediates the biosynthesis of novofumigatonin, a heavily oxygenated meroterpenoid containing a unique orthoester moiety. The first step of the pathway is the synthesis of 3,5-dimethylorsellinic acid (DMOA) by the polyketide synthase nvfA via condensation of one acetyl-CoA starter unit with 3 malonyl-CoA units and 2 methylations. DMOA is then converted to farnesyl-DMOA by the farnesyltransferase nvfB. Epoxydation by FAD-dependent monooxygenase nvfK, followed by a protonation-initiated cyclization catalyzed by the terpene cyclase nvfL leads to the production of asnavolin H. The short chain dehydrogenase nvfC then as a 3-OH dehydrogenase of asnovolin H to yield chemesin D. There are two branches to synthesize asnovolin A from chemesin D. In one branch, chemesin D undergoes Baeyer-Villiger oxidation by nvfH, methylation by nvfJ, and enoyl reduction by the nvfM D enoylreductase that reduces the double bond between C-5'and C-6', to form respectively asnovolin I, asnovolin K, and asnovolin A. In the other branch, the methylation precedes the Baeyer-Villiger oxidation and the enoyl reduction to yield asnovolin A via the asnovolin J intermediate. Asnovolin A is further converted to fumigatonoid A by the Fe(II)/2-oxoglutarate-dependent dioxygenase nvfI that catalyzes an endoperoxidation reaction. The alpha/beta hydrolase nvfD then acts as an epimerase that converts fumigatonoid A to its C-5' epimer, which then undergoes spontaneous or nvfD-catalyzed lactonization. The following step utilizes the ketoreductase nvfG to produce fumigatonoid B. The dioxygenase nvfE further converts fumigatonoid B into fumigatonoid C. Finally the Fe(II)/2-oxoglutarate-dependent dioxygenase nvfF catalyzes two rounds of oxidation to transform fumigatonoid C into the end product, novofumigatonin A. This chain is FAD-dependent monooxygenase nvfK, found in Aspergillus novofumigatus (strain IBT 16806).